The sequence spans 526 residues: NAD(P)H-quinone oxidoreductase chain 4 1 (526 aa).

The next 14 membrane-spanning stretches (helical) occupy residues 7-27 (FPWLSALVLLPLLAAFGIPLL), 35-55 (WYALAVGALDLGLMAYIFGWH), 86-106 (LSFPLVLLSGLITTLAIVAAW), 114-134 (LFFFLLLLMYGAQVGVFLAQD), 135-155 (LLLFFLMWEIELVPVYLLIAI), 168-188 (FILYTAAASIFILVGSLAMAF), 208-228 (ALQILAYAAFLIAFGVKLPVF), 242-262 (SAPISMILAGVLLKMGGYGLI), 276-296 (FAPVLAVLGAVNIVYGALAAL), 310-330 (IAHMGFVLIGIAAFTELGLNG), 331-351 (ALLQMISHGLIAAVLFFLTGI), 374-396 (AFALFTAGSLASLALPGMSGFVG), 417-437 (GIALLAAVGIILTPIYLLSML), and 463-483 (MAVALCLLLPILGIGLYPRLA).

Belongs to the complex I subunit 4 family.

The protein resides in the cellular thylakoid membrane. The catalysed reaction is a plastoquinone + NADH + (n+1) H(+)(in) = a plastoquinol + NAD(+) + n H(+)(out). It catalyses the reaction a plastoquinone + NADPH + (n+1) H(+)(in) = a plastoquinol + NADP(+) + n H(+)(out). Its function is as follows. NDH-1 shuttles electrons from NAD(P)H, via FMN and iron-sulfur (Fe-S) centers, to quinones in the respiratory chain. The immediate electron acceptor for the enzyme in this species is believed to be plastoquinone. Couples the redox reaction to proton translocation (for every two electrons transferred, four hydrogen ions are translocated across the cytoplasmic membrane), and thus conserves the redox energy in a proton gradient. The sequence is that of NAD(P)H-quinone oxidoreductase chain 4 1 from Synechococcus sp. (strain JA-3-3Ab) (Cyanobacteria bacterium Yellowstone A-Prime).